Consider the following 548-residue polypeptide: (2S)-methylsuccinyl-CoA dehydrogenase (548 aa).

FAD is bound by residues 282-291 (AVFTEPNTGS) and 315-317 (WIT). Residue Ser291 coordinates substrate. 409 to 412 (ESAR) contacts substrate. FAD is bound by residues Arg437 and 505–509 (QIHGG). Catalysis depends on Glu532, which acts as the Proton acceptor. 534–536 (AAE) serves as a coordination point for FAD.

It belongs to the acyl-CoA dehydrogenase family. As to quaternary structure, homodimer. Requires FAD as cofactor.

The catalysed reaction is (2S)-methylsuccinyl-CoA + oxidized [electron-transfer flavoprotein] + H(+) = 2-methylfumaryl-CoA + reduced [electron-transfer flavoprotein]. In terms of biological role, involved in the ethylmalonyl-CoA pathway, a new acetyl-CoA assimilation strategy that operates in a number of bacteria and replaces the glyoxylate cycle. Catalyzes the oxidation of (2S)-methylsuccinyl-CoA to yield mesaconyl-(C1)-CoA. Highly specific for (S)-methylsuccinyl-CoA. This is (2S)-methylsuccinyl-CoA dehydrogenase from Cereibacter sphaeroides (Rhodobacter sphaeroides).